The primary structure comprises 164 residues: Nucleotide-binding protein Mfla_1706 (164 aa).

The protein belongs to the YajQ family.

Functionally, nucleotide-binding protein. In Methylobacillus flagellatus (strain ATCC 51484 / DSM 6875 / VKM B-1610 / KT), this protein is Nucleotide-binding protein Mfla_1706.